Here is a 115-residue protein sequence, read N- to C-terminus: Phosphoribosyl-ATP pyrophosphatase (115 aa).

It belongs to the PRA-PH family.

Its subcellular location is the cytoplasm. It carries out the reaction 1-(5-phospho-beta-D-ribosyl)-ATP + H2O = 1-(5-phospho-beta-D-ribosyl)-5'-AMP + diphosphate + H(+). The protein operates within amino-acid biosynthesis; L-histidine biosynthesis; L-histidine from 5-phospho-alpha-D-ribose 1-diphosphate: step 2/9. In Saccharophagus degradans (strain 2-40 / ATCC 43961 / DSM 17024), this protein is Phosphoribosyl-ATP pyrophosphatase.